Reading from the N-terminus, the 955-residue chain is Iron-responsive element-binding protein 2 (955 aa).

Residues Cys-504, Cys-570, and Cys-573 each contribute to the [4Fe-4S] cluster site.

The protein belongs to the aconitase/IPM isomerase family. [4Fe-4S] cluster serves as cofactor. Post-translationally, ubiquitinated and degraded by the proteasome in presence of high level of iron and oxygen.

The protein resides in the cytoplasm. Its function is as follows. RNA-binding protein that binds to iron-responsive elements (IRES), which are stem-loop structures found in the 5'-UTR of ferritin, and delta aminolevulinic acid synthase mRNAs, and in the 3'-UTR of transferrin receptor mRNA. Binding to the IRE element in ferritin results in the repression of its mRNA translation. Binding of the protein to the transferrin receptor mRNA inhibits the degradation of this otherwise rapidly degraded mRNA. The chain is Iron-responsive element-binding protein 2 (ireb2) from Xenopus laevis (African clawed frog).